We begin with the raw amino-acid sequence, 122 residues long: Ribosome-binding factor A (122 aa).

It belongs to the RbfA family. In terms of assembly, monomer. Binds 30S ribosomal subunits, but not 50S ribosomal subunits or 70S ribosomes.

Its subcellular location is the cytoplasm. Functionally, one of several proteins that assist in the late maturation steps of the functional core of the 30S ribosomal subunit. Associates with free 30S ribosomal subunits (but not with 30S subunits that are part of 70S ribosomes or polysomes). Required for efficient processing of 16S rRNA. May interact with the 5'-terminal helix region of 16S rRNA. The chain is Ribosome-binding factor A from Albidiferax ferrireducens (strain ATCC BAA-621 / DSM 15236 / T118) (Rhodoferax ferrireducens).